We begin with the raw amino-acid sequence, 508 residues long: RanBP-type and C3HC4-type zinc finger-containing protein 1 (508 aa).

M1 carries the N-acetylmethionine modification. Residues 1–218 (MDEKTKKAEE…PGCEMCCRAR (218 aa)) form an interaction with IRF3 region. The tract at residues 1-268 (MDEKTKKAEE…NYLQHVQLEQ (268 aa)) is interaction with TAB2. S50 bears the Phosphoserine mark. Positions 55–119 (IRLCVSVEDA…DQETLHSHGI (65 aa)) constitute a Ubiquitin-like domain. The interaction with RNF31 stretch occupies residues 69–131 (VTIWLTVRPD…NGDSAYLYLL (63 aa)). Residues 161–191 (TLQPRGPLEPVLPKPRTHQETGQPDAAPESP) are disordered. The segment at 188-220 (PESPPVGWQCPGCTFINKPTRPGCEMCCRARPE) adopts a RanBP2-type zinc-finger fold. Residues 231-260 (DEEERARLAGEEEALRQYEQRKQQQQEGNY) are a coiled coil. The TRIAD supradomain stretch occupies residues 276-504 (EPAECPVCYS…VNGIPCHPSC (229 aa)). Zn(2+)-binding residues include C280, C283, C298, H300, C303, C306, and C321. An RING-type 1 zinc finger spans residues 280–330 (CPVCYSVLAPGEAVVLRECLHTFCRECLQGTIRNSQEAEVSCPFIDNTYSC). Y328 is modified (phosphotyrosine). Zn(2+)-binding residues include C330, C369, C374, C389, C392, C397, C400, H404, C409, C445, and C448. The IBR-type zinc-finger motif lies at 349–409 (QRFLDLGVSI…CKAIHERMNC (61 aa)). The segment at 445–474 (CPQCRIVVQKKDGCDWIRCTVCHTEICWVT) adopts an RING-type 2; atypical zinc-finger fold. The active site involves C458. Zn(2+) contacts are provided by C463 and C466.

Belongs to the RBR family. Component of the LUBAC complex (linear ubiquitin chain assembly complex) which consists of SHARPIN, RBCK1 and RNF31. LUBAC has a MW of approximately 600 kDa suggesting a heteromultimeric assembly of its subunits. Interacts with beta-I-type (PRKCB1) and zeta-type protein kinase C (PRKCZ). Interacts with UBE2L3. Interacts with IREB2 only in iron-rich conditions. Associates with the TNF-R1 signaling complex (TNF-RSC) in a stimulation-dependent manner. Interacts with EYA1, TAB2, TAB3, MAP3K7 TRAF6 and RIPK1. Interacts with IRF3. In terms of processing, auto-ubiquitinated. Auto-ubiquitination leads to degradation by the proteasome. Phosphorylated. In vitro, phosphorylation inhibits auto-ubiquitination activity. Widely expressed.

It catalyses the reaction [E2 ubiquitin-conjugating enzyme]-S-ubiquitinyl-L-cysteine + [acceptor protein]-L-lysine = [E2 ubiquitin-conjugating enzyme]-L-cysteine + [acceptor protein]-N(6)-ubiquitinyl-L-lysine.. The protein operates within protein modification; protein ubiquitination. Functionally, E3 ubiquitin-protein ligase, which accepts ubiquitin from specific E2 ubiquitin-conjugating enzymes, such as UBE2L3/UBCM4, and then transfers it to substrates. Functions as an E3 ligase for oxidized IREB2 and both heme and oxygen are necessary for IREB2 ubiquitination. Promotes ubiquitination of TAB2 and IRF3 and their degradation by the proteasome. Component of the LUBAC complex which conjugates linear ('Met-1'-linked) polyubiquitin chains to substrates and plays a key role in NF-kappa-B activation and regulation of inflammation. LUBAC conjugates linear polyubiquitin to IKBKG and RIPK1 and is involved in activation of the canonical NF-kappa-B and the JNK signaling pathways. Linear ubiquitination mediated by the LUBAC complex interferes with TNF-induced cell death and thereby prevents inflammation. LUBAC is recruited to the TNF-R1 signaling complex (TNF-RSC) following polyubiquitination of TNF-RSC components by BIRC2 and/or BIRC3 and to conjugate linear polyubiquitin to IKBKG and possibly other components contributing to the stability of the complex. The LUBAC complex is also involved in innate immunity by conjugating linear polyubiquitin chains at the surface of bacteria invading the cytosol to form the ubiquitin coat surrounding bacteria. LUBAC is not able to initiate formation of the bacterial ubiquitin coat, and can only promote formation of linear polyubiquitins on pre-existing ubiquitin. The bacterial ubiquitin coat acts as an 'eat-me' signal for xenophagy and promotes NF-kappa-B activation. Together with OTULIN, the LUBAC complex regulates the canonical Wnt signaling during angiogenesis. Binds polyubiquitin of different linkage types. In Rattus norvegicus (Rat), this protein is RanBP-type and C3HC4-type zinc finger-containing protein 1 (Rbck1).